A 457-amino-acid chain; its full sequence is Protein translocase subunit SecY (457 aa).

Helical transmembrane passes span 17-37, 75-95, 118-138, 162-182, 195-215, 230-250, 287-307, 326-346, 386-406, and 412-432; these read IFFT…PVPG, IALG…LVVF, TRLF…KFAL, WVFY…LMWV, ISLI…GSIF, IVSL…TVLI, VIPV…GQFL, VAYS…WTAT, LLGA…GRIL, and VSYF…LDTM.

It belongs to the SecY/SEC61-alpha family. As to quaternary structure, component of the Sec protein translocase complex. Heterotrimer consisting of SecY, SecE and SecG subunits. The heterotrimers can form oligomers, although 1 heterotrimer is thought to be able to translocate proteins. Interacts with the ribosome. Interacts with SecDF, and other proteins may be involved. Interacts with SecA.

The protein localises to the cell inner membrane. Its function is as follows. The central subunit of the protein translocation channel SecYEG. Consists of two halves formed by TMs 1-5 and 6-10. These two domains form a lateral gate at the front which open onto the bilayer between TMs 2 and 7, and are clamped together by SecE at the back. The channel is closed by both a pore ring composed of hydrophobic SecY resides and a short helix (helix 2A) on the extracellular side of the membrane which forms a plug. The plug probably moves laterally to allow the channel to open. The ring and the pore may move independently. This chain is Protein translocase subunit SecY, found in Chlamydia trachomatis serovar D (strain ATCC VR-885 / DSM 19411 / UW-3/Cx).